Consider the following 175-residue polypeptide: ADP-ribosylation factor 6 (175 aa).

Gly-2 carries N-myristoyl glycine lipidation. Lys-3 carries the N6-myristoyl lysine lipid modification. Residues 23 to 28 (AAGKTT), 41 to 44 (TIPT), 63 to 67 (DVGGQ), 122 to 125 (NKQD), and 155 to 156 (CA) contribute to the GTP site.

It belongs to the small GTPase superfamily. Arf family.

It localises to the cytoplasm. It is found in the cytosol. Its subcellular location is the cell membrane. The protein resides in the endosome membrane. The protein localises to the recycling endosome membrane. It localises to the cell projection. It is found in the filopodium membrane. Its subcellular location is the ruffle. The protein resides in the cleavage furrow. The protein localises to the midbody. It localises to the midbody ring. It is found in the golgi apparatus. It catalyses the reaction GTP + H2O = GDP + phosphate + H(+). Its function is as follows. GTP-binding protein involved in protein trafficking; regulates endocytic recycling and cytoskeleton remodeling. May modulate vesicle budding and uncoating within the Golgi apparatus. May contribute to the regulation of dendritic branching, filopodia extension and dendritic spine development. This chain is ADP-ribosylation factor 6 (arf6), found in Xenopus laevis (African clawed frog).